Consider the following 728-residue polypeptide: Cellulose synthase-like protein E6 (728 aa).

2 consecutive transmembrane segments (helical) span residues 21 to 43 and 53 to 73; these read AVYRLQAATVAAGILLVLYYRAT and AAWLGMAAAELWFAVYWVITQ. Catalysis depends on residues Asp141 and Asp446. A run of 5 helical transmembrane segments spans residues 523–543, 546–566, 646–666, 669–689, and 707–727; these read LWAANSLPTIYYVMIPALGLV, TPLFPEIMSPWATPFIYVFCV, PEFVIIATVALLNFVCLVAGL, IMAGVWNVFLPQVILCGLIVI, and IPLPVTLASIGFVMLAFLLPI.

The protein belongs to the glycosyltransferase 2 family. Plant cellulose synthase-like E subfamily.

It is found in the golgi apparatus membrane. In terms of biological role, thought to be a Golgi-localized beta-glycan synthase that polymerize the backbones of noncellulosic polysaccharides (hemicelluloses) of plant cell wall. This is Cellulose synthase-like protein E6 (CSLE6) from Oryza sativa subsp. japonica (Rice).